Consider the following 150-residue polypeptide: UPF0756 membrane protein NTHI1233 (150 aa).

Helical transmembrane passes span 1–21 (MTLQLNTIALLLVILLILGVL), 52–72 (YGVKIGIIILTIGVLSPLVSG), 81–101 (GFLSWKMALSIAVGVLVAWLA), and 123–143 (IIGVAFLGGIPVGPLIAAGIL).

The protein belongs to the UPF0756 family.

The protein localises to the cell membrane. This is UPF0756 membrane protein NTHI1233 from Haemophilus influenzae (strain 86-028NP).